Consider the following 283-residue polypeptide: Probable endonuclease 4 (283 aa).

Histidine 67, histidine 107, glutamate 144, aspartate 178, histidine 181, histidine 215, aspartate 228, histidine 230, and glutamate 260 together coordinate Zn(2+).

Belongs to the AP endonuclease 2 family. Zn(2+) is required as a cofactor.

The enzyme catalyses Endonucleolytic cleavage to 5'-phosphooligonucleotide end-products.. Its function is as follows. Endonuclease IV plays a role in DNA repair. It cleaves phosphodiester bonds at apurinic or apyrimidinic (AP) sites, generating a 3'-hydroxyl group and a 5'-terminal sugar phosphate. The polypeptide is Probable endonuclease 4 (Geobacter sp. (strain M21)).